The sequence spans 319 residues: Malate dehydrogenase (319 aa).

NAD(+) is bound by residues 10–15 and Asp-34; that span reads GAGNIG. Positions 83 and 89 each coordinate substrate. NAD(+) is bound by residues Asn-96 and 119-121; that span reads ITN. Substrate is bound by residues Asn-121 and Arg-152. His-176 functions as the Proton acceptor in the catalytic mechanism.

The protein belongs to the LDH/MDH superfamily. MDH type 3 family.

It catalyses the reaction (S)-malate + NAD(+) = oxaloacetate + NADH + H(+). Its function is as follows. Catalyzes the reversible oxidation of malate to oxaloacetate. This is Malate dehydrogenase from Francisella tularensis subsp. holarctica (strain FTNF002-00 / FTA).